The primary structure comprises 531 residues: T-complex protein 1 subunit zeta-2 (531 aa).

This sequence belongs to the TCP-1 chaperonin family. As to quaternary structure, component of the chaperonin-containing T-complex (TRiC), a heterooligomeric complex of about 850 to 900 kDa that forms two stacked rings, 12 to 16 nm in diameter. Testis specific.

Its subcellular location is the cytoplasm. Component of the chaperonin-containing T-complex (TRiC), a molecular chaperone complex that assists the folding of proteins upon ATP hydrolysis. This is T-complex protein 1 subunit zeta-2 (Cct6b) from Mus musculus (Mouse).